The sequence spans 413 residues: MTDNRVENSSGRAARKLRLALMGPAFIAAIGYIDPGNFATNIQAGASFGYQLLWVVVWANLMAMLIQILSAKLGIATGKNLAEQIRDHYPRPVVWFYWVQAEIIAMATDLAEFIGAAIGFKLILGVSLLQGAVLTGIATFLILMLQRRGQKPLEKVIGGLLLFVAAAYIVELFFSQPDMAQLGKGMVIPALPNPEAVFLAAGVLGATIMPHVIYLHSSLTQHLHGGTRQQRYSATKWDVAIAMTIAGFVNLAMMATAAAAFHFSGHTGIADLDQAYLTLEPLLSHAAATVFGLSLVAAGLSSTVVGTLAGQVVMQGFVRFHIPLWVRRSITMLPSFIVILMGLDPTRILVMSQVLLSFGIALALVPLLIFTSNATLMGELVNTRRVKQIGWIIVVLVVALNIWLLVGTVMGLS.

Over 1 to 19 the chain is Cytoplasmic; it reads MTDNRVENSSGRAARKLRL. A helical membrane pass occupies residues 20–39; that stretch reads ALMGPAFIAAIGYIDPGNFA. The Periplasmic segment spans residues 40–51; it reads TNIQAGASFGYQ. Residues 52–71 traverse the membrane as a helical segment; the sequence is LLWVVVWANLMAMLIQILSA. At 72-95 the chain is on the cytoplasmic side; the sequence is KLGIATGKNLAEQIRDHYPRPVVW. A helical membrane pass occupies residues 96–118; that stretch reads FYWVQAEIIAMATDLAEFIGAAI. The Periplasmic portion of the chain corresponds to 119–125; sequence GFKLILG. The chain crosses the membrane as a helical span at residues 126–145; that stretch reads VSLLQGAVLTGIATFLILML. The Cytoplasmic segment spans residues 146-155; sequence QRRGQKPLEK. The chain crosses the membrane as a helical span at residues 156–175; sequence VIGGLLLFVAAAYIVELFFS. The Periplasmic segment spans residues 176–196; the sequence is QPDMAQLGKGMVIPALPNPEA. The chain crosses the membrane as a helical span at residues 197 to 220; it reads VFLAAGVLGATIMPHVIYLHSSLT. Residues 221-238 are Cytoplasmic-facing; it reads QHLHGGTRQQRYSATKWD. The helical transmembrane segment at 239-258 threads the bilayer; the sequence is VAIAMTIAGFVNLAMMATAA. Residues 259–276 lie on the Periplasmic side of the membrane; the sequence is AAFHFSGHTGIADLDQAY. The chain crosses the membrane as a helical span at residues 277-297; it reads LTLEPLLSHAAATVFGLSLVA. Topologically, residues 298-327 are cytoplasmic; the sequence is AGLSSTVVGTLAGQVVMQGFVRFHIPLWVR. Residues 328 to 344 form a helical membrane-spanning segment; sequence RSITMLPSFIVILMGLD. Topologically, residues 345 to 350 are periplasmic; the sequence is PTRILV. A helical transmembrane segment spans residues 351–370; the sequence is MSQVLLSFGIALALVPLLIF. The Cytoplasmic segment spans residues 371–387; it reads TSNATLMGELVNTRRVK. Residues 388–406 form a helical membrane-spanning segment; that stretch reads QIGWIIVVLVVALNIWLLV. The Periplasmic segment spans residues 407-413; sequence GTVMGLS.

The protein belongs to the NRAMP family.

Its subcellular location is the cell inner membrane. In terms of biological role, h(+)-stimulated, divalent metal cation uptake system. The chain is Divalent metal cation transporter MntH from Salmonella gallinarum (strain 287/91 / NCTC 13346).